Consider the following 145-residue polypeptide: Peptide methionine sulfoxide reductase MsrB (145 aa).

One can recognise a MsrB domain in the interval 4–127; the sequence is KEELRQRIGD…NSAALKFIPY (124 aa). Residue C116 is the Nucleophile of the active site.

Belongs to the MsrB Met sulfoxide reductase family.

The enzyme catalyses L-methionyl-[protein] + [thioredoxin]-disulfide + H2O = L-methionyl-(R)-S-oxide-[protein] + [thioredoxin]-dithiol. In Streptococcus equi subsp. zooepidemicus (strain H70), this protein is Peptide methionine sulfoxide reductase MsrB.